Consider the following 309-residue polypeptide: Malate dehydrogenase (309 aa).

NAD(+)-binding positions include 9–14 (GAGAVG) and Asp33. 2 residues coordinate substrate: Arg82 and Arg88. NAD(+) is bound by residues Asn95 and 118–120 (VTN). Asn120 and Arg151 together coordinate substrate. The Proton acceptor role is filled by His175.

Belongs to the LDH/MDH superfamily. MDH type 3 family.

The catalysed reaction is (S)-malate + NAD(+) = oxaloacetate + NADH + H(+). Its function is as follows. Catalyzes the reversible oxidation of malate to oxaloacetate. This chain is Malate dehydrogenase, found in Thermomicrobium roseum (strain ATCC 27502 / DSM 5159 / P-2).